A 205-amino-acid polypeptide reads, in one-letter code: Putative protein phosphatase inhibitor 2-like protein 1 (205 aa).

4 disordered regions span residues 1 to 44, 64 to 92, 107 to 148, and 171 to 205; these read MAAS…SKKS, GLMKIDEPSTPYHSTMGDDEDACSDTETT, AEGL…TLHY, and VEEMLETAHGESMNTEESNQGSTASDQQQNKSRSS. Required for binding PPP1CC regions lie at residues 12 to 17 and 43 to 55; these read KGILKD and KSQKWDEMNILAT. Over residues 17 to 26 the composition is skewed to polar residues; sequence DNTSTTSSMV. Basic and acidic residues predominate over residues 30 to 44; sequence EHPRGSVHEQLSKKS. Position 73 is a phosphothreonine; by GSK3 (threonine 73). Acidic residues-rich tracts occupy residues 80 to 91 and 121 to 130; these read GDDEDACSDTET and SSGEEDSDLS. Serine 87 carries the post-translational modification Phosphoserine; by CK2. The span at 131–144 shows a compositional bias: basic and acidic residues; sequence PEEREKKRQFEMRR. The interval 147–150 is required for binding PPP1CC catalytic center, displacing metal ions and inhibition of PPP1CC catalytic activity; that stretch reads HYNE. The segment covering 182-205 has biased composition (polar residues); that stretch reads SMNTEESNQGSTASDQQQNKSRSS.

It belongs to the protein phosphatase inhibitor 2 family.

In terms of biological role, inhibitor of protein-phosphatase 1. This is Putative protein phosphatase inhibitor 2-like protein 1 (PPP1R2P1) from Homo sapiens (Human).